The following is a 204-amino-acid chain: Somatotropin (204 aa).

The first 17 residues, 1 to 17 (MDRAILLLSVLSVGVSS), serve as a signal peptide directing secretion. Gln18 bears the Pyrrolidone carboxylic acid mark. His35 is a binding site for Zn(2+). Cys69 and Cys177 are joined by a disulfide. Glu186 lines the Zn(2+) pocket. A disulfide bridge connects residues Cys194 and Cys202.

It belongs to the somatotropin/prolactin family.

The protein resides in the secreted. Functionally, growth hormone plays an important role in growth control and is involved in the regulation of several anabolic processes. Implicated as an osmoregulatory substance important for seawater adaptation. The polypeptide is Somatotropin (gh) (Dicentrarchus labrax (European seabass)).